The sequence spans 243 residues: Phosphoribosyl isomerase A (243 aa).

Aspartate 10 serves as the catalytic Proton acceptor. Aspartate 129 (proton donor) is an active-site residue.

Belongs to the HisA/HisF family.

Its subcellular location is the cytoplasm. The enzyme catalyses 1-(5-phospho-beta-D-ribosyl)-5-[(5-phospho-beta-D-ribosylamino)methylideneamino]imidazole-4-carboxamide = 5-[(5-phospho-1-deoxy-D-ribulos-1-ylimino)methylamino]-1-(5-phospho-beta-D-ribosyl)imidazole-4-carboxamide. It carries out the reaction N-(5-phospho-beta-D-ribosyl)anthranilate = 1-(2-carboxyphenylamino)-1-deoxy-D-ribulose 5-phosphate. It functions in the pathway amino-acid biosynthesis; L-histidine biosynthesis; L-histidine from 5-phospho-alpha-D-ribose 1-diphosphate: step 4/9. Its pathway is amino-acid biosynthesis; L-tryptophan biosynthesis; L-tryptophan from chorismate: step 3/5. Its function is as follows. Involved in both the histidine and tryptophan biosynthetic pathways. The polypeptide is Phosphoribosyl isomerase A (Mycobacteroides abscessus (strain ATCC 19977 / DSM 44196 / CCUG 20993 / CIP 104536 / JCM 13569 / NCTC 13031 / TMC 1543 / L948) (Mycobacterium abscessus)).